The primary structure comprises 366 residues: Peroxisomal (S)-2-hydroxy-acid oxidase GLO4 (366 aa).

The 360-residue stretch at 1 to 360 (MEDNLPVNVR…TRSHVMTEGD (360 aa)) folds into the FMN hydroxy acid dehydrogenase domain. Tyr27 is an a 2-oxocarboxylate binding site. Residues 80–82 (PTG), Ser109, 130–132 (QLY), and Thr158 each bind FMN. A 2-oxocarboxylate is bound at residue Tyr132. Arg167 lines the a 2-oxocarboxylate pocket. 2 residues coordinate FMN: Lys231 and Ser253. His255 serves as the catalytic Proton acceptor. A 2-oxocarboxylate is bound at residue Arg258. Residues 286–290 (DGGIR) and 309–310 (XX) each bind FMN. A Microbody targeting signal motif is present at residues 364–366 (SLL).

The protein belongs to the FMN-dependent alpha-hydroxy acid dehydrogenase family. As to quaternary structure, homotetramer. Requires FMN as cofactor.

It localises to the peroxisome. The catalysed reaction is a (2S)-2-hydroxycarboxylate + O2 = a 2-oxocarboxylate + H2O2. Its pathway is lipid metabolism; fatty acid metabolism. In terms of biological role, oxidase that catalyzes the oxidation of a broad range of 2-hydroxyacids to the corresponding 2-oxoacids, with a reduction of O2 to H2O2. May be involved in a general medium- and long-chain fatty acid catabolic pathway such as alpha-oxidation. The chain is Peroxisomal (S)-2-hydroxy-acid oxidase GLO4 (GLO4) from Oryza sativa subsp. indica (Rice).